A 450-amino-acid polypeptide reads, in one-letter code: LanC-like protein 2 (450 aa).

A lipid anchor (N-myristoyl glycine) is attached at G2. The interval 2–14 is interaction with inositol phospholipids; the sequence is GETMSKRLKFHLG. Y198 carries the phosphotyrosine modification.

It belongs to the LanC-like protein family. As to quaternary structure, interacts with an array of inositol phospholipids such as phosphatidylinositol 3-phosphate (PI3P), phosphatidylinositol 4-phosphate (PI4P) and phosphatidylinositol 5-phosphate (PI5P). PIP-binding enhances membrane association. In terms of processing, myristoylated. Essential for membrane association.

The protein resides in the nucleus. Its subcellular location is the cytoplasm. It is found in the cell membrane. Functionally, necessary for abscisic acid (ABA) binding on the cell membrane and activation of the ABA signaling pathway in granulocytes. This Mus musculus (Mouse) protein is LanC-like protein 2 (Lancl2).